The chain runs to 362 residues: Heat-inducible transcription repressor HrcA (362 aa).

The protein belongs to the HrcA family.

Its function is as follows. Negative regulator of class I heat shock genes (grpE-dnaK-dnaJ and groELS operons). Prevents heat-shock induction of these operons. The polypeptide is Heat-inducible transcription repressor HrcA (Bradyrhizobium sp. (strain ORS 278)).